Consider the following 830-residue polypeptide: Periplasmic nitrate reductase 2 (830 aa).

A signal peptide (tat-type signal) is located at residues 1–31 (MKVSRRKFIKAQAVASAAAAAGISIPISASN). Residues 41 to 97 (ITWEKAPCRFCGTGCSVNVGTKEGKVVATHGDIKSPVNRGLNCVKGYFLSKIMYGKD) form the 4Fe-4S Mo/W bis-MGD-type domain. [4Fe-4S] cluster-binding residues include C48, C51, C55, and C83. Mo-bis(molybdopterin guanine dinucleotide) is bound by residues K85, Q152, N177, C181, 245-249 (STFEH), 264-266 (QSD), M374, Q378, N484, 510-511 (SE), K533, D560, and 720-729 (TGRVIEHWHS). Substrate is bound at residue W796. Mo-bis(molybdopterin guanine dinucleotide) contacts are provided by N804 and K821.

It belongs to the prokaryotic molybdopterin-containing oxidoreductase family. NasA/NapA/NarB subfamily. Component of the periplasmic nitrate reductase NapAB complex composed of NapA and NapB. The cofactor is [4Fe-4S] cluster. It depends on Mo-bis(molybdopterin guanine dinucleotide) as a cofactor. In terms of processing, predicted to be exported by the Tat system. The position of the signal peptide cleavage has not been experimentally proven.

Its subcellular location is the periplasm. It catalyses the reaction 2 Fe(II)-[cytochrome] + nitrate + 2 H(+) = 2 Fe(III)-[cytochrome] + nitrite + H2O. Catalytic subunit of the periplasmic nitrate reductase complex NapAB. Receives electrons from NapB and catalyzes the reduction of nitrate to nitrite. This Photobacterium profundum (strain SS9) protein is Periplasmic nitrate reductase 2.